We begin with the raw amino-acid sequence, 233 residues long: Tail needle protein gp26 (233 aa).

Residues 2–60 (ADPSLNNPVVIQATRLDASILPRNVFSKSYLLYVIAQGTDVGAIAGKANEAGQGAYDAQ) form an interaction with tail hub protein gp10 region. 11 Trimerization heptad repeat repeats span residues 61–67 (VKNDEQD), 70–76 (LADHEAR), 77–83 (IKQLRID), 84–90 (VDDHESR), 91–97 (ITANTKA), 98–104 (ITALNVR), 105–111 (VTTAEGE), 112–118 (IASLQTN), 119–125 (VSALDGR), 126–132 (VTTAENN), and 133–139 (ISALQAD). Positions 61–139 (VKNDEQDVEL…ENNISALQAD (79 aa)) form a coiled coil. The segment at 175-233 (GWTAATGTANKGVFDADLTFAVSDTYTQSEIQAIANALITERRRTKALEDALRAHGLID) is inverted coiled coil. The short motif at 216–220 (RRRTK) is the Basic cluster element.

Belongs to the Lederbergvirus tail needle protein family. As to quaternary structure, homotrimer. The trimer forms an elongated coiled-coil (240A x 25A). The N-terminal tip may exist in a pre-ejection extended conformation, which may fold into a trimer of hairpins only after ejection into the host. Interacts (via N-terminus) with the tail hub gp10. Interacts with the head-to-tail adapter protein gp4.

It is found in the virion. Its function is as follows. Cell-perforating component and plug protein of the phage tail machine. Together with gp4 and gp10, gp26 is required for stabilization of the condensed DNA within the capsid by plugging the hole through which the DNA enters. Host cell membrane perforation allows viral DNA ejection. The needle penetrates the host outer membrane. The needle is released and the internal head protein gp7 is ejected to form an extra-cellular channel. This Salmonella typhimurium (Bacteriophage P22) protein is Tail needle protein gp26 (26).